Consider the following 1956-residue polypeptide: MELPFASVGTTNFRRFTPESLAEIEKQIAAHRAAKKARTKHRGQEDKGEKPRPQLDLKACNQLPKFYGELPAELVGEPLEDLDPFYSTHRTFMVLNKSRTISRFSATWALWLFSPFNLIRRTAIKVSVHSWFSIFITITILVNCVCMTRTDLPEKVEYVFTVIYTFEALIKILARGFCLNEFTYLRDPWNWLDFSVITLAYVGAAIDLRGISGLRTFRVLRALKTVSVIPGLKVIVGALIHSVRKLADVTILTVFCLSVFALVGLQLFKGNLKNKCIRNGTDPHKADNLSSEMAEYIFIKPGTTDPLLCGNGSDAGHCPGGYVCLKTPDNPDFNYTSFDSFAWAFLSLFRLMTQDSWERLYQQTLRASGKMYMVFFVLVIFLGSFYLVNLILAVVTMAYEEQSQATIAEIEAKEKKFQEALEVLQKEQEVLAALGIDTTSLQSHSGSPLASKNANERRPRVKSRVSEGSTDDNRSPQSDPYNQRRMSFLGLSSGRRRASHGSVFHFRAPSQDISFPDGITDDGVFHGDQESRRGSILLGRGAGQTGPLPRSPLPQSPNPGRRHGEEGQLGVPTGELTAGAPEGPALDTTGQKSFLSAGYLNEPFRAQRAMSVVSIMTSVIEELEESKLKCPPCLISFAQKYLIWECCPKWRKFKMALFELVTDPFAELTITLCIVVNTVFMAMEHYPMTDAFDAMLQAGNIVFTVFFTMEMAFKIIAFDPYYYFQKKWNIFDCVIVTVSLLELSASKKGSLSVLRTFRLLRVFKLAKSWPTLNTLIKIIGNSVGALGNLTFILAIIVFIFALVGKQLLSEDYGCRKDGVSVWNGEKLRWHMCDFFHSFLVVFRILCGEWIENMWVCMEVSQKSICLILFLTVMVLGNLVVLNLFIALLLNSFSADNLTAPEDDGEVNNLQLALARIQVLGHRASRAIASYISSHCRFRWPKVETQLGMKPPLTSSEAKNHIATDAVSAAVGNLTKPALSSPKENHGDFITDPNVWVSVPIAEGESDLDELEEDMEQASQSSWQEEDPKGQQEQLPQVQKCENHQAARSPASMMSSEDLAPYLGESWKRKDSPQVPAEGVDDTSSSEGSTVDCPDPEEILRKIPELADDLDEPDDCFTEGCTRRCPCCNVNTSKSPWATGWQVRKTCYRIVEHSWFESFIIFMILLSSGALAFEDNYLEEKPRVKSVLEYTDRVFTFIFVFEMLLKWVAYGFKKYFTNAWCWLDFLIVNISLTSLIAKILEYSDVASIKALRTLRALRPLRALSRFEGMRVVVDALVGAIPSIMNVLLVCLIFWLIFSIMGVNLFAGKFSKCVDTRNNPFSNVNSTMVNNKSECHNQNSTGHFFWVNVKVNFDNVAMGYLALLQVATFKGWMDIMYAAVDSGEINSQPNWENNLYMYLYFVVFIIFGGFFTLNLFVGVIIDNFNQQKKKLGGQDIFMTEEQKKYYNAMKKLGSKKPQKPIPRPLNKYQGFVFDIVTRQAFDIIIMVLICLNMITMMVETDEQGEEKTKVLGRINQFFVAVFTGECVMKMFALRQYYFTNGWNVFDFIVVILSIGSLLFSAILKSLENYFSPTLFRVIRLARIGRILRLIRAAKGIRTLLFALMMSLPALFNIGLLLFLVMFIYSIFGMASFANVVDEAGIDDMFNFKTFGNSMLCLFQITTSAGWDGLLSPILNTGPPYCDPNLPNSNGSRGNCGSPAVGIIFFTTYIIISFLIVVNMYIAVILENFNVATEESTEPLSEDDFDMFYETWEKFDPEATQFIAFSALSDFADTLSGPLRIPKPNQNILIQMDLPLVPGDKIHCLDILFAFTKNVLGESGELDSLKTNMEEKFMATNLSKASYEPIATTLRWKQEDLSATVIQKAYRSYMLHRSLTLSNTLHVPRAEEDGVSLPGEGYVTFMANSGLPDKSETASATSFPPSYDSVTRGLSDRANINPSSSMQNEDEVAAKEGNSPGPQ.

The Cytoplasmic segment spans residues 1-125; it reads MELPFASVGT…FNLIRRTAIK (125 aa). Positions 31 to 54 are disordered; it reads HRAAKKARTKHRGQEDKGEKPRPQ. Residues 32–41 show a composition bias toward basic residues; it reads RAAKKARTKH. Positions 42–54 are enriched in basic and acidic residues; it reads RGQEDKGEKPRPQ. Residues 116–404 form an I repeat; sequence FNLIRRTAIK…VTMAYEEQSQ (289 aa). Residues 126–149 traverse the membrane as a helical segment; that stretch reads VSVHSWFSIFITITILVNCVCMTR. Residues 150 to 154 lie on the Extracellular side of the membrane; the sequence is TDLPE. A helical transmembrane segment spans residues 155-174; that stretch reads KVEYVFTVIYTFEALIKILA. Residues 175-187 lie on the Cytoplasmic side of the membrane; it reads RGFCLNEFTYLRD. Residues 188–206 form a helical membrane-spanning segment; the sequence is PWNWLDFSVITLAYVGAAI. At 207–212 the chain is on the extracellular side; sequence DLRGIS. The chain crosses the membrane as a helical; Voltage-sensor span at residues 213-232; it reads GLRTFRVLRALKTVSVIPGL. Residues 233-248 lie on the Cytoplasmic side of the membrane; it reads KVIVGALIHSVRKLAD. Residues 249-272 traverse the membrane as a helical segment; that stretch reads VTILTVFCLSVFALVGLQLFKGNL. At 273 to 340 the chain is on the extracellular side; sequence KNKCIRNGTD…PDFNYTSFDS (68 aa). Cysteines 276 and 318 form a disulfide. 4 N-linked (GlcNAc...) asparagine glycosylation sites follow: Asn-279, Asn-288, Asn-311, and Asn-334. The segment at residues 341–365 is an intramembrane region (pore-forming); that stretch reads FAWAFLSLFRLMTQDSWERLYQQTL. Topologically, residues 366 to 372 are extracellular; sequence RASGKMY. The chain crosses the membrane as a helical span at residues 373 to 398; the sequence is MVFFVLVIFLGSFYLVNLILAVVTMA. At 399-658 the chain is on the cytoplasmic side; it reads YEEQSQATIA…KWRKFKMALF (260 aa). Ser-440, Ser-443, Ser-466, and Ser-478 each carry phosphoserine. Over residues 441 to 453 the composition is skewed to polar residues; it reads LQSHSGSPLASKN. Disordered regions lie at residues 441–484 and 537–581; these read LQSH…YNQR and LLGR…AGAP. A compositionally biased stretch (polar residues) spans 475-484; sequence SPQSDPYNQR. A phosphoserine mark is found at Ser-611 and Ser-614. The stretch at 646 to 910 is one II repeat; it reads CCPKWRKFKM…EDDGEVNNLQ (265 aa). The chain crosses the membrane as a helical span at residues 659-683; that stretch reads ELVTDPFAELTITLCIVVNTVFMAM. Topologically, residues 684-694 are extracellular; the sequence is EHYPMTDAFDA. The helical transmembrane segment at 695 to 718 threads the bilayer; that stretch reads MLQAGNIVFTVFFTMEMAFKIIAF. At 719–726 the chain is on the cytoplasmic side; the sequence is DPYYYFQK. The chain crosses the membrane as a helical span at residues 727-746; it reads KWNIFDCVIVTVSLLELSAS. At 747–752 the chain is on the extracellular side; that stretch reads KKGSLS. The chain crosses the membrane as a helical; Voltage-sensor span at residues 753–772; sequence VLRTFRLLRVFKLAKSWPTL. The Cytoplasmic portion of the chain corresponds to 773 to 788; the sequence is NTLIKIIGNSVGALGN. The chain crosses the membrane as a helical span at residues 789–809; it reads LTFILAIIVFIFALVGKQLLS. Residues 810-833 lie on the Extracellular side of the membrane; it reads EDYGCRKDGVSVWNGEKLRWHMCD. Residues 834–854 constitute an intramembrane region (pore-forming); that stretch reads FFHSFLVVFRILCGEWIENMW. Topologically, residues 855 to 863 are extracellular; that stretch reads VCMEVSQKS. A disulfide bridge connects residues Cys-856 and Cys-865. The helical transmembrane segment at 864–889 threads the bilayer; it reads ICLILFLTVMVLGNLVVLNLFIALLL. At 890–1148 the chain is on the cytoplasmic side; the sequence is NSFSADNLTA…GWQVRKTCYR (259 aa). The disordered stretch occupies residues 1008–1094; the sequence is DELEEDMEQA…SEGSTVDCPD (87 aa). An III repeat occupies 1141–1450; it reads QVRKTCYRIV…KKYYNAMKKL (310 aa). The helical transmembrane segment at 1149–1172 threads the bilayer; it reads IVEHSWFESFIIFMILLSSGALAF. The Extracellular portion of the chain corresponds to 1173–1185; it reads EDNYLEEKPRVKS. The chain crosses the membrane as a helical span at residues 1186–1211; it reads VLEYTDRVFTFIFVFEMLLKWVAYGF. Over 1212 to 1217 the chain is Cytoplasmic; it reads KKYFTN. A helical transmembrane segment spans residues 1218-1239; the sequence is AWCWLDFLIVNISLTSLIAKIL. Over 1240–1243 the chain is Extracellular; that stretch reads EYSD. The helical; Voltage-sensor transmembrane segment at 1244–1265 threads the bilayer; the sequence is VASIKALRTLRALRPLRALSRF. Topologically, residues 1266-1284 are cytoplasmic; the sequence is EGMRVVVDALVGAIPSIMN. Residues 1285-1312 form a helical membrane-spanning segment; it reads VLLVCLIFWLIFSIMGVNLFAGKFSKCV. At 1313–1354 the chain is on the extracellular side; the sequence is DTRNNPFSNVNSTMVNNKSECHNQNSTGHFFWVNVKVNFDNV. N-linked (GlcNAc...) asparagine glycosylation is found at Asn-1323, Asn-1329, and Asn-1337. An intramembrane region (pore-forming) is located at residues 1355–1376; it reads AMGYLALLQVATFKGWMDIMYA. Residues 1377-1392 are Extracellular-facing; it reads AVDSGEINSQPNWENN. Residues 1393-1419 traverse the membrane as a helical segment; sequence LYMYLYFVVFIIFGGFFTLNLFVGVII. The Cytoplasmic segment spans residues 1420-1472; sequence DNFNQQKKKLGGQDIFMTEEQKKYYNAMKKLGSKKPQKPIPRPLNKYQGFVFD. Ser-1452 bears the Phosphoserine; by PKC mark. The stretch at 1459–1758 is one IV repeat; sequence IPRPLNKYQG…WEKFDPEATQ (300 aa). A helical membrane pass occupies residues 1473 to 1496; sequence IVTRQAFDIIIMVLICLNMITMMV. Topologically, residues 1497–1507 are extracellular; the sequence is ETDEQGEEKTK. The chain crosses the membrane as a helical span at residues 1508 to 1531; it reads VLGRINQFFVAVFTGECVMKMFAL. Over 1532–1537 the chain is Cytoplasmic; it reads RQYYFT. The chain crosses the membrane as a helical span at residues 1538-1561; sequence NGWNVFDFIVVILSIGSLLFSAIL. At 1562–1573 the chain is on the extracellular side; that stretch reads KSLENYFSPTLF. A helical; Voltage-sensor membrane pass occupies residues 1574–1595; the sequence is RVIRLARIGRILRLIRAAKGIR. The Cytoplasmic portion of the chain corresponds to 1596–1610; it reads TLLFALMMSLPALFN. Residues 1611-1633 traverse the membrane as a helical segment; it reads IGLLLFLVMFIYSIFGMASFANV. Over 1634-1647 the chain is Extracellular; the sequence is VDEAGIDDMFNFKT. Positions 1648–1670 form an intramembrane region, pore-forming; it reads FGNSMLCLFQITTSAGWDGLLSP. The Extracellular portion of the chain corresponds to 1671 to 1698; it reads ILNTGPPYCDPNLPNSNGSRGNCGSPAV. Asn-1687 carries an N-linked (GlcNAc...) asparagine glycan. The helical transmembrane segment at 1699-1723 threads the bilayer; it reads GIIFFTTYIIISFLIVVNMYIAVIL. Residues 1724–1956 lie on the Cytoplasmic side of the membrane; the sequence is ENFNVATEES…AKEGNSPGPQ (233 aa). The IQ domain occupies 1852–1881; that stretch reads EDLSATVIQKAYRSYMLHRSLTLSNTLHVP. The interval 1906 to 1956 is disordered; sequence DKSETASATSFPPSYDSVTRGLSDRANINPSSSMQNEDEVAAKEGNSPGPQ. Residues 1931 to 1940 are compositionally biased toward polar residues; sequence ANINPSSSMQ.

Belongs to the sodium channel (TC 1.A.1.10) family. Nav1.8/SCN10A subfamily. As to quaternary structure, the channel consists of an ion conducting pore forming alpha-subunit regulated by one or more associated auxiliary subunits SCN1B, SCN2B and SCN3B; electrophysiological properties may vary depending on the type of the associated beta subunits. Found in a number of complexes with PRX, DYNLT1 and PDZD2. Interacts with proteins such as FSTL1, PRX, DYNLT1, PDZD2, S100A10 and many others. Interacts with NEDD4 and NEDD4L. In terms of processing, ubiquitinated by NEDD4L; which promotes its endocytosis. Post-translationally, phosphorylation at Ser-1452 by PKC in a highly conserved cytoplasmic loop slows inactivation of the sodium channel and reduces peak sodium currents. Lacks the cysteine which covalently binds the conotoxin GVIIJ. This cysteine (position 815) is speculated in other sodium channel subunits alpha to be implied in covalent binding with the sodium channel subunit beta-2 or beta-4. In terms of tissue distribution, expressed in dorsal root ganglia, trigeminal ganglia, nodose ganglia and sciatic nerve.

The protein localises to the cell membrane. The enzyme catalyses Na(+)(in) = Na(+)(out). In terms of biological role, tetrodotoxin-resistant channel that mediates the voltage-dependent sodium ion permeability of excitable membranes. Assuming opened or closed conformations in response to the voltage difference across the membrane, the protein forms a sodium-selective channel through which sodium ions may pass in accordance with their electrochemical gradient. Plays a role in neuropathic pain mechanisms. The sequence is that of Sodium channel protein type 10 subunit alpha from Rattus norvegicus (Rat).